We begin with the raw amino-acid sequence, 91 residues long: Large ribosomal subunit protein bL27 (91 aa).

A disordered region spans residues 1–21 (MAHKKAGGSSRNGRDSESKRL).

It belongs to the bacterial ribosomal protein bL27 family.

This chain is Large ribosomal subunit protein bL27, found in Azoarcus sp. (strain BH72).